Reading from the N-terminus, the 347-residue chain is MNSGFYLHESLVFFLLTVFALAFILGIFLGKPVIRWLKKRNHYDQVQKEYCEKLEVLHQDKKYTPTAGGILFFIVLLLTIFFWLPLGKLSTWLFAFLIISWSSLGWYDDIVKKRKKKGHGISAKQKFVLQLLISAVITTAVMYIYKGTSLFYTLRVPFFGSVSLGHSVLGQVFYFILAVLAIVGTGNAVNLTDGLDGLAAGTTCMCAFGLLVVAVTSTTIPLATDIPVLLTALLGVSLAFLKYNCSPAQVFMGDTGSLLIGGVLGSCAVMLRAELLLILLGGVFVAEAGSVILQIASCRFRKKRIFLCSPLHHHYEYKGVSETQVVKRFWTAGFFCMVFGIIAALWR.

10 helical membrane passes run 10–30 (SLVFFLLTVFALAFILGIFLG), 67–87 (AGGILFFIVLLLTIFFWLPLG), 91–111 (TWLFAFLIISWSSLGWYDDIV), 127–147 (FVLQLLISAVITTAVMYIYKG), 164–184 (LGHSVLGQVFYFILAVLAIVG), 195–215 (LDGLAAGTTCMCAFGLLVVAV), 220–240 (IPLATDIPVLLTALLGVSLAF), 250–270 (VFMGDTGSLLIGGVLGSCAVM), 275–295 (LLLILLGGVFVAEAGSVILQI), and 325–345 (VVKRFWTAGFFCMVFGIIAAL).

It belongs to the glycosyltransferase 4 family. MraY subfamily. The cofactor is Mg(2+).

The protein resides in the cell inner membrane. The catalysed reaction is UDP-N-acetyl-alpha-D-muramoyl-L-alanyl-gamma-D-glutamyl-meso-2,6-diaminopimeloyl-D-alanyl-D-alanine + di-trans,octa-cis-undecaprenyl phosphate = di-trans,octa-cis-undecaprenyl diphospho-N-acetyl-alpha-D-muramoyl-L-alanyl-D-glutamyl-meso-2,6-diaminopimeloyl-D-alanyl-D-alanine + UMP. Its pathway is cell wall biogenesis; peptidoglycan biosynthesis. Its function is as follows. Catalyzes the initial step of the lipid cycle reactions in the biosynthesis of the cell wall peptidoglycan: transfers peptidoglycan precursor phospho-MurNAc-pentapeptide from UDP-MurNAc-pentapeptide onto the lipid carrier undecaprenyl phosphate, yielding undecaprenyl-pyrophosphoryl-MurNAc-pentapeptide, known as lipid I. The chain is Phospho-N-acetylmuramoyl-pentapeptide-transferase from Chlamydia abortus (strain DSM 27085 / S26/3) (Chlamydophila abortus).